The following is a 475-amino-acid chain: 7-dehydrocholesterol reductase (475 aa).

Residues 1-21 (MAAKSQPSAPKTKSTSGLTNG) form a disordered region. Ser-14 carries the post-translational modification Phosphoserine. The next 6 membrane-spanning stretches (helical) occupy residues 40-60 (LASVIFLLLFAPFIVYYFIMA), 151-173 (WLLTHLLWFANAHLLGWFSPTII), 178-200 (IPLLWCANILGYTVSTFAMVKGY), 266-286 (VTNSMVLVNILQAIYVLDFFW), 306-326 (LGWGDCVWLPYLYTLQGLYLV), and 331-351 (QLPTYYALGVLLLGLLGYYIF). NADP(+) contacts are provided by residues Lys-358, Arg-362, Leu-395, Trp-400, and 407 to 408 (NY). Residues 420–440 (LACGGGHLLPYFYIIFMAILL) traverse the membrane as a helical segment. Residues Asp-447, 451 to 455 (CANKY), and Tyr-462 contribute to the NADP(+) site.

The protein belongs to the ERG4/ERG24 family. Interacts with DHCR24; this interaction regulates DHCR7 activity. Interacts with TMEM147.

It is found in the endoplasmic reticulum membrane. The catalysed reaction is cholesterol + NADP(+) = 7-dehydrocholesterol + NADPH + H(+). It catalyses the reaction 7-dehydrodesmosterol + NADPH + H(+) = desmosterol + NADP(+). It carries out the reaction 5,6alpha-epoxy-5alpha-cholestan-3beta-ol + H2O = 5alpha-cholestane-3beta,5,6beta-triol. The enzyme catalyses 5,6beta-epoxy-5beta-cholestan-3beta-ol + H2O = 5alpha-cholestane-3beta,5,6beta-triol. It functions in the pathway steroid biosynthesis; cholesterol biosynthesis. Oxidoreductase that catalyzes the last step of the cholesterol synthesis pathway, which transforms cholesta-5,7-dien-3beta-ol (7-dehydrocholesterol,7-DHC) into cholesterol by reducing the C7-C8 double bond of its sterol core. Can also metabolize cholesta-5,7,24-trien-3beta-ol (7-dehydrodemosterol, 7-DHD) to desmosterol, which is then metabolized by the Delta(24)-sterol reductase (DHCR24) to cholesterol. Modulates ferroptosis (a form of regulated cell death driven by iron-dependent lipid peroxidation) through the metabolic breakdown of the anti-ferroptotic metabolites 7-DHC and 7-DHD which, when accumulated, divert the propagation of peroxyl radical-mediated damage from phospholipid components to its sterol core, protecting plasma and mitochondrial membranes from phospholipid autoxidation. Its function is as follows. Component of the microsomal antiestrogen binding site (AEBS), a multiproteic complex at the ER membrane that consists of an association between cholestenol Delta-isomerase/EBP and DHCR7. This complex is responsible for cholesterol-5,6-epoxide hydrolase (ChEH) activity, which consists in the hydration of cholesterol-5,6-epoxides (5,6-EC) into cholestane-3beta,5alpha,6beta-triol (CT). The precise role of each component of this complex has not been described yet. This Bos taurus (Bovine) protein is 7-dehydrocholesterol reductase (DHCR7).